The sequence spans 184 residues: dCTP deaminase (184 aa).

107–112 contacts dCTP; sequence KSTYAR. Catalysis depends on glutamate 133, which acts as the Proton donor/acceptor. The dCTP site is built by glutamine 152, tyrosine 166, and glutamine 176.

This sequence belongs to the dCTP deaminase family. In terms of assembly, homotrimer.

The catalysed reaction is dCTP + H2O + H(+) = dUTP + NH4(+). It functions in the pathway pyrimidine metabolism; dUMP biosynthesis; dUMP from dCTP (dUTP route): step 1/2. Functionally, catalyzes the deamination of dCTP to dUTP. This is dCTP deaminase from Herpetosiphon aurantiacus (strain ATCC 23779 / DSM 785 / 114-95).